The following is a 943-amino-acid chain: UvrABC system protein A (943 aa).

Position 32 to 39 (32 to 39 (GLSGSGKS)) interacts with ATP. The segment at 251-278 (CPVCGFTVPELEPRLFSFNAPFGSCSEC) adopts a C4-type zinc-finger fold. ABC transporter domains are found at residues 308-589 (WNPI…SKSI) and 609-937 (GNGR…HYLK). 641–648 (GVSGSGKS) lines the ATP pocket. The C4-type zinc-finger motif lies at 740–766 (CEACSGDGIIKIEMHFLPDVYVACEVC).

Belongs to the ABC transporter superfamily. UvrA family. In terms of assembly, forms a heterotetramer with UvrB during the search for lesions.

The protein localises to the cytoplasm. The UvrABC repair system catalyzes the recognition and processing of DNA lesions. UvrA is an ATPase and a DNA-binding protein. A damage recognition complex composed of 2 UvrA and 2 UvrB subunits scans DNA for abnormalities. When the presence of a lesion has been verified by UvrB, the UvrA molecules dissociate. This Streptococcus pneumoniae serotype 4 (strain ATCC BAA-334 / TIGR4) protein is UvrABC system protein A.